We begin with the raw amino-acid sequence, 238 residues long: Lipid transferase CIDEC (238 aa).

Residues 1–35 (MEYAMKSLSLLYPKSLSRHVSVRTSVVTQQLLSEP) are required for liquid-liquid phase separation (LLPS). In terms of domain architecture, CIDE-N spans 41–118 (RARPCRVSTA…VLQKGQKWQP (78 aa)).

The protein belongs to the CIDE family. As to quaternary structure, homodimer. Homooligomer; undergoes liquid-liquid phase separation (LLPS) via its N-terminus, facilitating lipid droplet fusion, occurs at the lipid droplet contact sites. Interacts with CIDEA. Interacts with PLIN1. Interacts with NFAT5; this interaction is direct and retains NFAT5 in the cytoplasm. Interacts with CEBPB. Interacts with isoform CLSTN3beta of CLSTN3; inhibiting the lipid transferase activity of CIDEC. Post-translationally, ubiquitinated and targeted to proteasomal degradation, resulting in a short half-life (about 15 minutes in 3T3-L1 cells). Protein stability depends on triaclyglycerol synthesis, fatty acid availability and lipid droplet formation. Expressed mainly in adipose tissue, small intestine, heart, colon and stomach and, at lower levels, in brain, kidney and liver.

Its subcellular location is the lipid droplet. It is found in the endoplasmic reticulum. The protein localises to the nucleus. It carries out the reaction a triacyl-sn-glycerol(in) = a triacyl-sn-glycerol(out). In terms of biological role, lipid transferase specifically expressed in white adipose tissue, which promotes unilocular lipid droplet formation by mediating lipid droplet fusion. Lipid droplet fusion promotes their enlargement, restricting lipolysis and favoring lipid storage. Localizes on the lipid droplet surface, at focal contact sites between lipid droplets, and mediates atypical lipid droplet fusion by undergoing liquid-liquid phase separation (LLPS) and promoting directional net neutral lipid transfer from the smaller to larger lipid droplets. The transfer direction may be driven by the internal pressure difference between the contacting lipid droplet pair. Its role in neutral lipid transfer and lipid droplet enlargement is activated by the interaction with PLIN1. May also act as a CEBPB coactivator in the white adipose tissue to control the expression of a subset of CEBPB downstream target genes, including SOCS1, SOCS3, TGFB1, TGFBR1, ID2 and XDH. When overexpressed in preadipocytes, induces apoptosis or increases cell susceptibility to apoptosis induced by serum deprivation or TGFB treatment. The polypeptide is Lipid transferase CIDEC (Homo sapiens (Human)).